Consider the following 534-residue polypeptide: NEDD8-activating enzyme E1 regulatory subunit (534 aa).

At Ala2 the chain carries N-acetylalanine. Lys6 and Lys341 each carry N6-acetyllysine. Residues 331–344 (DMIADSNKYIKLQN) are interaction with UBA3.

This sequence belongs to the ubiquitin-activating E1 family. ULA1 subfamily. Heterodimer of UBA3 and NAE1. The complex binds NEDD8 and UBE2M. Binds APP and TP53BP2. In terms of processing, ubiquitinated by TRIP12, leading to its degradation by the proteasome. Expressed throughout the brain. In hippocampus, strongly expressed in granule cells and in the pyramidal cell layer. Strongly expressed in the piriform cortex. In the cerebellum, expressed only in Purkinje cells.

The protein localises to the cell membrane. Its pathway is protein modification; protein neddylation. With respect to regulation, binding of TP53BP2 to the regulatory subunit NAE1 decreases neddylation activity. Its function is as follows. Regulatory subunit of the dimeric UBA3-NAE1 E1 enzyme. E1 activates NEDD8 by first adenylating its C-terminal glycine residue with ATP, thereafter linking this residue to the side chain of the catalytic cysteine, yielding a NEDD8-UBA3 thioester and free AMP. E1 finally transfers NEDD8 to the catalytic cysteine of UBE2M. Necessary for cell cycle progression through the S-M checkpoint. Overexpression of NAE1 causes apoptosis through deregulation of NEDD8 conjugation. The covalent attachment of NEDD8 to target proteins is known as 'neddylation' and the process is involved in the regulation of cell growth, viability and development. The chain is NEDD8-activating enzyme E1 regulatory subunit (Nae1) from Rattus norvegicus (Rat).